The primary structure comprises 97 residues: Apolipoprotein C-II (97 aa).

Residues 1–22 (MGSRFFLALFLALLVLGNEVQG) form the signal peptide. Residues 63–71 (SVDEKLRDM) are lipid binding. Positions 75-97 (SSAAMTTYAGIFTDQLLTLLKGE) are lipoprotein lipase cofactor.

The protein belongs to the apolipoprotein C2 family. In terms of processing, proapolipoprotein C-II is synthesized as a sialic acid containing glycoprotein which is subsequently desialylated prior to its proteolytic processing. Post-translationally, proapolipoprotein C-II, the major form found in plasma undergoes proteolytic cleavage of its N-terminal hexapeptide to generate the mature form apolipoprotein C-II, which occurs as the minor form in plasma.

Its subcellular location is the secreted. Component of chylomicrons, very low-density lipoproteins (VLDL), low-density lipoproteins (LDL), and high-density lipoproteins (HDL) in plasma. Plays an important role in lipoprotein metabolism as an activator of lipoprotein lipase. The sequence is that of Apolipoprotein C-II (Apoc2) from Rattus norvegicus (Rat).